A 1060-amino-acid polypeptide reads, in one-letter code: Carbamoyl phosphate synthase large chain (1060 aa).

The interval 1–401 is carboxyphosphate synthetic domain; that stretch reads MPKRQDIHKI…SLLKAVRSLE (401 aa). Residues Arg-129, Arg-169, Gly-175, Gly-176, Arg-208, Ile-210, Glu-215, Gly-241, Val-242, His-243, Gln-284, and Glu-298 each contribute to the ATP site. An ATP-grasp 1 domain is found at 133 to 327; it reads KNLMQKLHEP…IAKMAAKIAV (195 aa). Residues Gln-284, Glu-298, and Asn-300 each coordinate Mg(2+). Gln-284, Glu-298, and Asn-300 together coordinate Mn(2+). The tract at residues 402 to 546 is oligomerization domain; sequence VGLIHPERPA…YSTYESSTES (145 aa). Residues 547 to 929 are carbamoyl phosphate synthetic domain; sequence VKSDKPSVLV…ALYKAFEAAG (383 aa). The region spanning 671 to 861 is the ATP-grasp 2 domain; that stretch reads DQVIKSLKLP…LAQVATLAIL (191 aa). ATP-binding residues include Arg-707, His-746, Leu-748, Glu-752, Gly-777, Ile-778, His-779, Ser-780, Gln-820, and Glu-832. Positions 820, 832, and 834 each coordinate Mg(2+). Mn(2+)-binding residues include Gln-820, Glu-832, and Asn-834. Residues 930–1060 enclose the MGS-like domain; that stretch reads MHLPQFGRAL…QAFSISPIKS (131 aa). The segment at 930–1060 is allosteric domain; sequence MHLPQFGRAL…QAFSISPIKS (131 aa).

This sequence belongs to the CarB family. As to quaternary structure, composed of two chains; the small (or glutamine) chain promotes the hydrolysis of glutamine to ammonia, which is used by the large (or ammonia) chain to synthesize carbamoyl phosphate. Tetramer of heterodimers (alpha,beta)4. Requires Mg(2+) as cofactor. It depends on Mn(2+) as a cofactor.

The enzyme catalyses hydrogencarbonate + L-glutamine + 2 ATP + H2O = carbamoyl phosphate + L-glutamate + 2 ADP + phosphate + 2 H(+). It carries out the reaction hydrogencarbonate + NH4(+) + 2 ATP = carbamoyl phosphate + 2 ADP + phosphate + 2 H(+). It participates in amino-acid biosynthesis; L-arginine biosynthesis; carbamoyl phosphate from bicarbonate: step 1/1. Its pathway is pyrimidine metabolism; UMP biosynthesis via de novo pathway; (S)-dihydroorotate from bicarbonate: step 1/3. In terms of biological role, large subunit of the glutamine-dependent carbamoyl phosphate synthetase (CPSase). CPSase catalyzes the formation of carbamoyl phosphate from the ammonia moiety of glutamine, carbonate, and phosphate donated by ATP, constituting the first step of 2 biosynthetic pathways, one leading to arginine and/or urea and the other to pyrimidine nucleotides. The large subunit (synthetase) binds the substrates ammonia (free or transferred from glutamine from the small subunit), hydrogencarbonate and ATP and carries out an ATP-coupled ligase reaction, activating hydrogencarbonate by forming carboxy phosphate which reacts with ammonia to form carbamoyl phosphate. The protein is Carbamoyl phosphate synthase large chain of Lacticaseibacillus casei (strain BL23) (Lactobacillus casei).